Here is a 296-residue protein sequence, read N- to C-terminus: tRNA uridine(34) hydroxylase (296 aa).

Positions 132–226 constitute a Rhodanese domain; the sequence is AGRPVVMLDT…YFEEVGGAHY (95 aa). C186 acts as the Cysteine persulfide intermediate in catalysis.

Belongs to the TrhO family.

The enzyme catalyses uridine(34) in tRNA + AH2 + O2 = 5-hydroxyuridine(34) in tRNA + A + H2O. Catalyzes oxygen-dependent 5-hydroxyuridine (ho5U) modification at position 34 in tRNAs. The protein is tRNA uridine(34) hydroxylase of Burkholderia thailandensis (strain ATCC 700388 / DSM 13276 / CCUG 48851 / CIP 106301 / E264).